The chain runs to 135 residues: Protein NrdI (135 aa).

This sequence belongs to the NrdI family.

Probably involved in ribonucleotide reductase function. In Brucella abortus (strain S19), this protein is Protein NrdI.